The primary structure comprises 650 residues: Kinesin-like protein KIF22-B (650 aa).

Residues 31–359 (RVRVAVRLRP…LNFAAKSKQI (329 aa)) form the Kinesin motor domain. 116–123 (GPTGAGKT) provides a ligand contact to ATP. Residues 365–416 (SRETTQTVAQPAMKRPREEAEATTSSRQRKKSKTDSTESSPNSSMESTGKRK) form a disordered region. The span at 401–411 (TESSPNSSMES) shows a compositional bias: low complexity. Residues 452–498 (KRERMALLKKWEESQMEIERLKEKQKELEQKAMEAEARLEKSNNSDL) adopt a coiled-coil conformation. Residues 560 to 563 (GHEN) carry the Important for regulated proteolytic degradation motif.

The protein belongs to the TRAFAC class myosin-kinesin ATPase superfamily. Kinesin family. Ubiquitinated, leading to its subsequent proteasomal degradation.

It is found in the nucleus. The protein resides in the cytoplasm. It localises to the cytoskeleton. Kinesin family member that is involved in spindle formation and the movements of chromosomes during mitosis and meiosis. Binds to microtubules and to DNA. The protein is Kinesin-like protein KIF22-B (kif22-b) of Xenopus laevis (African clawed frog).